Reading from the N-terminus, the 291-residue chain is 4-hydroxy-tetrahydrodipicolinate synthase (291 aa).

Threonine 45 is a binding site for pyruvate. The active-site Proton donor/acceptor is tyrosine 131. Lysine 159 serves as the catalytic Schiff-base intermediate with substrate. Isoleucine 202 contacts pyruvate.

Belongs to the DapA family. As to quaternary structure, homotetramer; dimer of dimers.

It is found in the cytoplasm. It catalyses the reaction L-aspartate 4-semialdehyde + pyruvate = (2S,4S)-4-hydroxy-2,3,4,5-tetrahydrodipicolinate + H2O + H(+). Its pathway is amino-acid biosynthesis; L-lysine biosynthesis via DAP pathway; (S)-tetrahydrodipicolinate from L-aspartate: step 3/4. In terms of biological role, catalyzes the condensation of (S)-aspartate-beta-semialdehyde [(S)-ASA] and pyruvate to 4-hydroxy-tetrahydrodipicolinate (HTPA). The protein is 4-hydroxy-tetrahydrodipicolinate synthase of Methanosarcina acetivorans (strain ATCC 35395 / DSM 2834 / JCM 12185 / C2A).